Reading from the N-terminus, the 132-residue chain is uncharacterized protein (132 aa).

The interval 113-132 (LDPQSPLHSPPLSTSPDSRR) is disordered.

This is an uncharacterized protein from Saccharomyces cerevisiae (strain ATCC 204508 / S288c) (Baker's yeast).